The primary structure comprises 1404 residues: DNA-directed RNA polymerase subunit beta' (1404 aa).

The Zn(2+) site is built by Cys70, Cys72, Cys85, and Cys88. Residues Asp460, Asp462, and Asp464 each coordinate Mg(2+). Zn(2+) contacts are provided by Cys814, Cys888, Cys895, and Cys898.

The protein belongs to the RNA polymerase beta' chain family. The RNAP catalytic core consists of 2 alpha, 1 beta, 1 beta' and 1 omega subunit. When a sigma factor is associated with the core the holoenzyme is formed, which can initiate transcription. The cofactor is Mg(2+). Zn(2+) serves as cofactor.

It carries out the reaction RNA(n) + a ribonucleoside 5'-triphosphate = RNA(n+1) + diphosphate. DNA-dependent RNA polymerase catalyzes the transcription of DNA into RNA using the four ribonucleoside triphosphates as substrates. This Shewanella piezotolerans (strain WP3 / JCM 13877) protein is DNA-directed RNA polymerase subunit beta'.